The following is a 264-amino-acid chain: Acyl-[acyl-carrier-protein]--UDP-N-acetylglucosamine O-acyltransferase (264 aa).

This sequence belongs to the transferase hexapeptide repeat family. LpxA subfamily. In terms of assembly, homotrimer.

Its subcellular location is the cytoplasm. It carries out the reaction a (3R)-hydroxyacyl-[ACP] + UDP-N-acetyl-alpha-D-glucosamine = a UDP-3-O-[(3R)-3-hydroxyacyl]-N-acetyl-alpha-D-glucosamine + holo-[ACP]. It functions in the pathway glycolipid biosynthesis; lipid IV(A) biosynthesis; lipid IV(A) from (3R)-3-hydroxytetradecanoyl-[acyl-carrier-protein] and UDP-N-acetyl-alpha-D-glucosamine: step 1/6. Functionally, involved in the biosynthesis of lipid A, a phosphorylated glycolipid that anchors the lipopolysaccharide to the outer membrane of the cell. This is Acyl-[acyl-carrier-protein]--UDP-N-acetylglucosamine O-acyltransferase from Leptothrix cholodnii (strain ATCC 51168 / LMG 8142 / SP-6) (Leptothrix discophora (strain SP-6)).